The primary structure comprises 966 residues: Phosphoenolpyruvate carboxylase, housekeeping isozyme (966 aa).

Phosphoserine is present on S11. Active-site residues include H172 and K601.

It belongs to the PEPCase type 1 family. In terms of assembly, homotetramer. It depends on Mg(2+) as a cofactor.

It localises to the cytoplasm. It carries out the reaction oxaloacetate + phosphate = phosphoenolpyruvate + hydrogencarbonate. With respect to regulation, by light-reversible phosphorylation. Through the carboxylation of phosphoenolpyruvate (PEP) it forms oxaloacetate, a four-carbon dicarboxylic acid source for the tricarboxylic acid cycle. This is Phosphoenolpyruvate carboxylase, housekeeping isozyme from Saccharum hybrid (Sugarcane).